The chain runs to 344 residues: Dihydroorotate dehydrogenase (quinone) (344 aa).

Residues 65 to 69 (AGFDK) and Thr89 each bind FMN. A substrate-binding site is contributed by Lys69. 114–118 (NRMGF) contacts substrate. FMN-binding residues include Asn145 and Asn178. Asn178 is a substrate binding site. Residue Ser181 is the Nucleophile of the active site. Asn183 lines the substrate pocket. Lys215 and Thr243 together coordinate FMN. 244-245 (NT) contributes to the substrate binding site. Residues Gly269, Gly298, and 319–320 (YT) contribute to the FMN site.

The protein belongs to the dihydroorotate dehydrogenase family. Type 2 subfamily. As to quaternary structure, monomer. FMN is required as a cofactor.

The protein localises to the cell membrane. It carries out the reaction (S)-dihydroorotate + a quinone = orotate + a quinol. Its pathway is pyrimidine metabolism; UMP biosynthesis via de novo pathway; orotate from (S)-dihydroorotate (quinone route): step 1/1. Functionally, catalyzes the conversion of dihydroorotate to orotate with quinone as electron acceptor. The sequence is that of Dihydroorotate dehydrogenase (quinone) from Clavibacter michiganensis subsp. michiganensis (strain NCPPB 382).